Reading from the N-terminus, the 364-residue chain is Probable dual-specificity RNA methyltransferase RlmN (364 aa).

The Proton acceptor role is filled by Glu106. The 240-residue stretch at 112-351 folds into the Radical SAM core domain; that stretch reads YPHRNTVCIS…CTVRDTRGRE (240 aa). A disulfide bond links Cys119 and Cys356. Positions 126, 130, and 133 each coordinate [4Fe-4S] cluster. S-adenosyl-L-methionine is bound by residues 177–178, Ser211, 234–236, and Asn313; these read GE and SLH. Cys356 serves as the catalytic S-methylcysteine intermediate.

It belongs to the radical SAM superfamily. RlmN family. Requires [4Fe-4S] cluster as cofactor.

Its subcellular location is the cytoplasm. It carries out the reaction adenosine(2503) in 23S rRNA + 2 reduced [2Fe-2S]-[ferredoxin] + 2 S-adenosyl-L-methionine = 2-methyladenosine(2503) in 23S rRNA + 5'-deoxyadenosine + L-methionine + 2 oxidized [2Fe-2S]-[ferredoxin] + S-adenosyl-L-homocysteine. It catalyses the reaction adenosine(37) in tRNA + 2 reduced [2Fe-2S]-[ferredoxin] + 2 S-adenosyl-L-methionine = 2-methyladenosine(37) in tRNA + 5'-deoxyadenosine + L-methionine + 2 oxidized [2Fe-2S]-[ferredoxin] + S-adenosyl-L-homocysteine. Specifically methylates position 2 of adenine 2503 in 23S rRNA and position 2 of adenine 37 in tRNAs. The sequence is that of Probable dual-specificity RNA methyltransferase RlmN from Mycolicibacterium paratuberculosis (strain ATCC BAA-968 / K-10) (Mycobacterium paratuberculosis).